The following is a 223-amino-acid chain: MNSNVENLPPHIIRLVYKEVTTLTADPPDGIKVFPNEEDLTDLQVTIEGPEGTPYAGGLFRMKLLLGKDFPASPPKGYFLTKIFHPNVGPNGEICVNVLKRDWTAELGIRHVLLTIKCLLIHPNPESALNEEAGRLLLENYEEYAARARLLTEIHGGACSTSSGRAEATQDLASGASASSADPMIPGVLGGAEGPMAKKHAGERDKKLAAKKKLDKKRALRRL.

The 147-residue stretch at 11–157 folds into the UBC core domain; sequence HIIRLVYKEV…ARLLTEIHGG (147 aa). Residue C95 is the Glycyl thioester intermediate of the active site. The segment at 170–223 is disordered; that stretch reads QDLASGASASSADPMIPGVLGGAEGPMAKKHAGERDKKLAAKKKLDKKRALRRL. Residues 209-223 show a composition bias toward basic residues; that stretch reads AAKKKLDKKRALRRL.

The protein belongs to the ubiquitin-conjugating enzyme family.

The enzyme catalyses S-ubiquitinyl-[E1 ubiquitin-activating enzyme]-L-cysteine + [E2 ubiquitin-conjugating enzyme]-L-cysteine = [E1 ubiquitin-activating enzyme]-L-cysteine + S-ubiquitinyl-[E2 ubiquitin-conjugating enzyme]-L-cysteine.. Its pathway is protein modification; protein ubiquitination. Catalyzes the covalent attachment of ubiquitin to other proteins. Acts as an essential factor of the anaphase promoting complex/cyclosome (APC/C), a cell cycle-regulated ubiquitin ligase that controls progression through mitosis. Acts by specifically elongating 'Lys-11'-linked polyubiquitin chains initiated by the E2 enzyme ube2c/ubch10 on APC/C substrates, enhancing the degradation of APC/C substrates by the proteasome and promoting mitotic exit. The sequence is that of Ubiquitin-conjugating enzyme E2 S-A (ube2s-a) from Xenopus laevis (African clawed frog).